We begin with the raw amino-acid sequence, 279 residues long: 4-hydroxy-3-methylbut-2-enyl diphosphate reductase (279 aa).

Cys-12 lines the [4Fe-4S] cluster pocket. The (2E)-4-hydroxy-3-methylbut-2-enyl diphosphate site is built by His-40 and His-72. Residues His-40 and His-72 each coordinate dimethylallyl diphosphate. Residues His-40 and His-72 each coordinate isopentenyl diphosphate. Cys-94 lines the [4Fe-4S] cluster pocket. His-122 contributes to the (2E)-4-hydroxy-3-methylbut-2-enyl diphosphate binding site. A dimethylallyl diphosphate-binding site is contributed by His-122. An isopentenyl diphosphate-binding site is contributed by His-122. Glu-124 serves as the catalytic Proton donor. Thr-161 lines the (2E)-4-hydroxy-3-methylbut-2-enyl diphosphate pocket. Cys-189 is a binding site for [4Fe-4S] cluster. The (2E)-4-hydroxy-3-methylbut-2-enyl diphosphate site is built by Ser-217, Asn-219, and Ser-261. Dimethylallyl diphosphate contacts are provided by Ser-217, Asn-219, and Ser-261. The isopentenyl diphosphate site is built by Ser-217, Asn-219, and Ser-261.

The protein belongs to the IspH family. The cofactor is [4Fe-4S] cluster.

It carries out the reaction isopentenyl diphosphate + 2 oxidized [2Fe-2S]-[ferredoxin] + H2O = (2E)-4-hydroxy-3-methylbut-2-enyl diphosphate + 2 reduced [2Fe-2S]-[ferredoxin] + 2 H(+). The catalysed reaction is dimethylallyl diphosphate + 2 oxidized [2Fe-2S]-[ferredoxin] + H2O = (2E)-4-hydroxy-3-methylbut-2-enyl diphosphate + 2 reduced [2Fe-2S]-[ferredoxin] + 2 H(+). It participates in isoprenoid biosynthesis; dimethylallyl diphosphate biosynthesis; dimethylallyl diphosphate from (2E)-4-hydroxy-3-methylbutenyl diphosphate: step 1/1. Its pathway is isoprenoid biosynthesis; isopentenyl diphosphate biosynthesis via DXP pathway; isopentenyl diphosphate from 1-deoxy-D-xylulose 5-phosphate: step 6/6. Its function is as follows. Catalyzes the conversion of 1-hydroxy-2-methyl-2-(E)-butenyl 4-diphosphate (HMBPP) into a mixture of isopentenyl diphosphate (IPP) and dimethylallyl diphosphate (DMAPP). Acts in the terminal step of the DOXP/MEP pathway for isoprenoid precursor biosynthesis. This is 4-hydroxy-3-methylbut-2-enyl diphosphate reductase from Syntrophotalea carbinolica (strain DSM 2380 / NBRC 103641 / GraBd1) (Pelobacter carbinolicus).